Reading from the N-terminus, the 499-residue chain is Lysine--tRNA ligase (499 aa).

2 residues coordinate Mg(2+): E403 and E410.

It belongs to the class-II aminoacyl-tRNA synthetase family. As to quaternary structure, homodimer. The cofactor is Mg(2+).

Its subcellular location is the cytoplasm. The enzyme catalyses tRNA(Lys) + L-lysine + ATP = L-lysyl-tRNA(Lys) + AMP + diphosphate. The sequence is that of Lysine--tRNA ligase from Campylobacter hominis (strain ATCC BAA-381 / DSM 21671 / CCUG 45161 / LMG 19568 / NCTC 13146 / CH001A).